The primary structure comprises 116 residues: NAD(P)H-quinone oxidoreductase subunit M (116 aa).

The protein belongs to the complex I NdhM subunit family. In terms of assembly, NDH-1 can be composed of about 15 different subunits; different subcomplexes with different compositions have been identified which probably have different functions.

Its subcellular location is the cellular thylakoid membrane. The catalysed reaction is a plastoquinone + NADH + (n+1) H(+)(in) = a plastoquinol + NAD(+) + n H(+)(out). The enzyme catalyses a plastoquinone + NADPH + (n+1) H(+)(in) = a plastoquinol + NADP(+) + n H(+)(out). Functionally, NDH-1 shuttles electrons from an unknown electron donor, via FMN and iron-sulfur (Fe-S) centers, to quinones in the respiratory and/or the photosynthetic chain. The immediate electron acceptor for the enzyme in this species is believed to be plastoquinone. Couples the redox reaction to proton translocation, and thus conserves the redox energy in a proton gradient. Cyanobacterial NDH-1 also plays a role in inorganic carbon-concentration. In Synechococcus sp. (strain RCC307), this protein is NAD(P)H-quinone oxidoreductase subunit M.